The primary structure comprises 194 residues: Archaetidylinositol phosphate synthase (194 aa).

The next 2 helical transmembrane spans lie at 32 to 51 and 58 to 78; these read IYTL…WLYI and LLIA…RFTG. Residues aspartate 67, aspartate 70, aspartate 88, and aspartate 92 each coordinate Mg(2+). The Proton acceptor role is filled by aspartate 92. 3 consecutive transmembrane segments (helical) span residues 103-123, 150-170, and 172-192; these read LYIA…GLIV, IAIL…LALA, and AAAV…AGEL.

This sequence belongs to the CDP-alcohol phosphatidyltransferase class-I family. Mn(2+) is required as a cofactor. Mg(2+) serves as cofactor.

Its subcellular location is the cell membrane. It carries out the reaction CDP-2,3-bis-O-(phytanyl)-sn-glycerol + 1D-myo-inositol 3-phosphate = saturated 1-archaetidyl-1D-myo-inositol 3-phosphate + CMP + H(+). It functions in the pathway lipid metabolism; phospholipid metabolism. In terms of biological role, catalyzes the formation of archaetidylinositol phosphate (AIP) from CDP-archaeol (CDP-ArOH or CDP-2,3-bis-(O-phytanyl)-sn-glycerol) and 1L-myo-inositol 1-phosphate (IP or 1D-myo-inositol 3-phosphate). AIP is a precursor of archaetidyl-myo-inositol (AI), an ether-type inositol phospholipid ubiquitously distributed in archaea membranes and essential for glycolipid biosynthesis in archaea. This Aeropyrum pernix (strain ATCC 700893 / DSM 11879 / JCM 9820 / NBRC 100138 / K1) protein is Archaetidylinositol phosphate synthase.